A 757-amino-acid polypeptide reads, in one-letter code: MFEIKESSMEWEGKSLHIKTGEVARQAAGAACVSYGGTVVLAVVTLQKDTAASKKTSDLSGLALVTNFLAKSYALGRIPNGFFKREGKLSEREVLASRVVDRAVRPLIEENLVNEVNIVCKLLAHGNRKVLPEIPALIAASAALQLSGIPFSGPVIGVDVDMRGSEVTCNEIRETEGGLELFVACTEESVVMVEAEASEASEEEVVNALSEALKSAKPVFSFINEFVKSVTTVKPIGVLYDNKELCEKVRAACSGQLESVYNERISSKEKRHNKLGQIYTDTFAQLSDDGYAESEVLFFIKKLEKEIVRKNVLEEGIRPDGRSLTEIRPISIALDYLPGTHGSALFTRGGTQSLVVATLGSYQDEQVMDDIDGERRESVLLHYNFLPYAVGEVGALRAPGRREIGHGRLALKAVKAVLPGKEVFPYTLRLVSEITESDGSSSMATVCGSSLALMDTGVPITKHVAGIAMGLITDGVRSAVLSDISGDEDMLGDMDFKVAGTRNGIVALQMDMKVRGISIATIRDALNQALAGRLHILEKMEHVIAKPRESLKDSAPKILCYKIDKDVVHKVIGSGGKTIRGISSDTSAKIDIDQNNYVYIMADTEEALMEAKTRVDMASGASDSNVPQLKIGELYDGKIVSVVDFGLFVVLPNKQEGLVHISEISKNRVNDIRADYTEGQAVTVRIKDIGSDGKIKLTMRIDEDRVGSGGSSSSPKKRFGAHPRKNGKDNRSNNSERGFNERSGSAEGSSISRKRFF.

Residues Asp489 and Asp495 each coordinate Mg(2+). Positions 556–615 constitute a KH domain; the sequence is PKILCYKIDKDVVHKVIGSGGKTIRGISSDTSAKIDIDQNNYVYIMADTEEALMEAKTRV. The S1 motif domain maps to 632 to 700; that stretch reads GELYDGKIVS…SDGKIKLTMR (69 aa). Residues 702-757 form a disordered region; that stretch reads DEDRVGSGGSSSSPKKRFGAHPRKNGKDNRSNNSERGFNERSGSAEGSSISRKRFF. Over residues 715–725 the composition is skewed to basic residues; that stretch reads PKKRFGAHPRK. Residues 732-751 are compositionally biased toward polar residues; the sequence is SNNSERGFNERSGSAEGSSI.

It belongs to the polyribonucleotide nucleotidyltransferase family. Mg(2+) is required as a cofactor.

The protein localises to the cytoplasm. It catalyses the reaction RNA(n+1) + phosphate = RNA(n) + a ribonucleoside 5'-diphosphate. In terms of biological role, involved in mRNA degradation. Catalyzes the phosphorolysis of single-stranded polyribonucleotides processively in the 3'- to 5'-direction. The sequence is that of Polyribonucleotide nucleotidyltransferase from Neorickettsia sennetsu (strain ATCC VR-367 / Miyayama) (Ehrlichia sennetsu).